An 81-amino-acid chain; its full sequence is Photosystem I iron-sulfur center (81 aa).

4Fe-4S ferredoxin-type domains lie at Ser2–Trp31 and Gly37–Tyr68. [4Fe-4S] cluster-binding residues include Cys11, Cys14, Cys17, Cys21, Cys48, Cys51, Cys54, and Cys58.

As to quaternary structure, the cyanobacterial PSI reaction center is composed of one copy each of PsaA,B,C,D,E,F,I,J,K,L,M and X, and forms trimeric complexes. Requires [4Fe-4S] cluster as cofactor.

It is found in the cellular thylakoid membrane. The catalysed reaction is reduced [plastocyanin] + hnu + oxidized [2Fe-2S]-[ferredoxin] = oxidized [plastocyanin] + reduced [2Fe-2S]-[ferredoxin]. In terms of biological role, apoprotein for the two 4Fe-4S centers FA and FB of photosystem I (PSI); essential for photochemical activity. FB is the terminal electron acceptor of PSI, donating electrons to ferredoxin. The C-terminus interacts with PsaA/B/D and helps assemble the protein into the PSI complex. Required for binding of PsaD and PsaE to PSI. PSI is a plastocyanin/cytochrome c6-ferredoxin oxidoreductase, converting photonic excitation into a charge separation, which transfers an electron from the donor P700 chlorophyll pair to the spectroscopically characterized acceptors A0, A1, FX, FA and FB in turn. The chain is Photosystem I iron-sulfur center from Prochlorococcus marinus (strain SARG / CCMP1375 / SS120).